A 165-amino-acid chain; its full sequence is GKQSTSKSVTREKKDVKKTVAPKKAIKKVTKKSTTPVKTSKAAPASTTPIKDTTPVKADAKKIHRTKTMKESVSDAKKTVHKSAGDKKLSRSQKPAKREAAKKIVHPAKKAAAKPKTAKKEVKKDTKPVKKDAKKDTKPVKKDAKKDTKPAKKDTKKATKGSKKN.

A disordered region spans residues glycine 1–asparagine 165. Over residues valine 9–lysine 18 the composition is skewed to basic and acidic residues. Positions valine 20–lysine 31 are enriched in basic residues. Low complexity predominate over residues lysine 32 to lysine 41. Phosphothreonine is present on residues threonine 48 and threonine 54. A compositionally biased stretch (basic and acidic residues) spans threonine 68–leucine 89. Serine 83 is subject to Phosphoserine. The span at lysine 103–threonine 117 shows a compositional bias: basic residues. Threonine 117 is subject to Phosphothreonine. The segment covering alanine 118–lysine 157 has biased composition (basic and acidic residues).

Post-translationally, cell-growth/division-associated phosphorylation by a CDC2-like kinase. Is additionally phosphorylated on either Ser-33, Thr-34 or Thr-35, and on either Thr-39 or Ser-40.

It localises to the nucleus. The protein localises to the chromosome. Histones H1 are necessary for the condensation of nucleosome chains into higher-order structures. The chain is Histone H1 (HHO) from Tetrahymena pyriformis.